A 210-amino-acid chain; its full sequence is Thymidylate kinase (210 aa).

10–17 (GPEGAGKS) provides a ligand contact to ATP.

The protein belongs to the thymidylate kinase family.

It catalyses the reaction dTMP + ATP = dTDP + ADP. Its function is as follows. Phosphorylation of dTMP to form dTDP in both de novo and salvage pathways of dTTP synthesis. This is Thymidylate kinase from Pseudomonas syringae pv. tomato (strain ATCC BAA-871 / DC3000).